The sequence spans 1495 residues: ABC transporter C family member 12 (1495 aa).

11 consecutive transmembrane segments (helical) span residues 38-58 (VMLVSHFVLLGLCFYRIWIIF), 76-96 (VLGLLACYCVVEPVLRLVMGI), 110-130 (FEVASLMVEAFAWFSMLVLIG), 146-166 (FGVLYVLVADAVLLDLVLPLK), 173-195 (ALYLFISSRCSQALFGILLLIYI), 303-323 (FWLAGIFKIGNDLSQFVGPVI), 337-357 (AWVGYVYAFIIFVGVTLGVLC), 420-440 (GLWSAPFRIIVSMILLYQQLG), 441-461 (VASLFGSLILFLLIPLQTLII), 528-548 (FILNSIPVVVTVVSFGVFVLL), and 558-578 (FTSLSLFAVLRFPLNMLPNLL). Positions 303-583 (FWLAGIFKIG…LPNLLSQVVN (281 aa)) constitute an ABC transmembrane type-1 1 domain. In terms of domain architecture, ABC transporter 1 spans 615-839 (ISIKNGYFSW…GILFKKLMEN (225 aa)). 650 to 657 (GGTGEGKT) lines the ATP pocket. Helical transmembrane passes span 907-927 (AVGGLWVVMILLACYLATEVL), 949-969 (PGFYIVVYALLGFGQVAVTFT), 1042-1062 (FALIGTVSTISLWAIMPLLIL), 1140-1160 (LETLGGVMIWLTATFAVLQNG), and 1166-1186 (AGFASTMGLLLSYTLNITSLL). The 285-residue stretch at 914–1198 (VMILLACYLA…VLRQASRAEN (285 aa)) folds into the ABC transmembrane type-1 2 domain. The region spanning 1235–1469 (IKFEDVHLRY…DTSAFFRMVH (235 aa)) is the ABC transporter 2 domain. 1269–1276 (GRTGAGKS) contributes to the ATP binding site.

It belongs to the ABC transporter superfamily. ABCC family. Conjugate transporter (TC 3.A.1.208) subfamily. In terms of tissue distribution, ubiquitous.

The protein localises to the membrane. The catalysed reaction is ATP + H2O + xenobioticSide 1 = ADP + phosphate + xenobioticSide 2.. In terms of biological role, pump for glutathione S-conjugates. The polypeptide is ABC transporter C family member 12 (ABCC12) (Arabidopsis thaliana (Mouse-ear cress)).